Reading from the N-terminus, the 573-residue chain is DEAD-box ATP-dependent RNA helicase 47A (573 aa).

The Q motif motif lies at 131-159 (KSFEELGLPPLLIDRLNKEGLTAPTEVQS). Positions 162 to 362 (IPIISQKHDA…RSWGHDPVLV (201 aa)) constitute a Helicase ATP-binding domain. 175 to 182 (SYTGSGKT) is an ATP binding site. The DEAD box signature appears at 293 to 296 (DEVD). Residues 421 to 565 (TLRRCIHALE…PCEFTEGKLL (145 aa)) form the Helicase C-terminal domain.

The protein belongs to the DEAD box helicase family.

The catalysed reaction is ATP + H2O = ADP + phosphate + H(+). This is DEAD-box ATP-dependent RNA helicase 47A from Oryza sativa subsp. japonica (Rice).